We begin with the raw amino-acid sequence, 320 residues long: ADP-L-glycero-D-manno-heptose-6-epimerase (320 aa).

NADP(+) contacts are provided by residues 10–11 (FI), 31–32 (DN), Lys38, Lys53, 75–79 (LGACS), and Asn92. The Proton acceptor role is filled by Tyr139. Lys143 serves as a coordination point for NADP(+). Residue Asn168 coordinates substrate. Residues Val169 and Lys177 each coordinate NADP(+). The active-site Proton acceptor is the Lys177. Residues Gly179, His186, 200–203 (FEGS), Arg213, and Tyr277 contribute to the substrate site.

The protein belongs to the NAD(P)-dependent epimerase/dehydratase family. HldD subfamily. As to quaternary structure, homopentamer. NADP(+) serves as cofactor.

The enzyme catalyses ADP-D-glycero-beta-D-manno-heptose = ADP-L-glycero-beta-D-manno-heptose. It functions in the pathway nucleotide-sugar biosynthesis; ADP-L-glycero-beta-D-manno-heptose biosynthesis; ADP-L-glycero-beta-D-manno-heptose from D-glycero-beta-D-manno-heptose 7-phosphate: step 4/4. Its function is as follows. Catalyzes the interconversion between ADP-D-glycero-beta-D-manno-heptose and ADP-L-glycero-beta-D-manno-heptose via an epimerization at carbon 6 of the heptose. The protein is ADP-L-glycero-D-manno-heptose-6-epimerase of Alkalilimnicola ehrlichii (strain ATCC BAA-1101 / DSM 17681 / MLHE-1).